The chain runs to 284 residues: Nitrogenase iron protein 1 (284 aa).

17 to 24 (GKGGIGKS) is a binding site for ATP. Position 105 (Cys-105) interacts with [4Fe-4S] cluster. An ADP-ribosylarginine; by dinitrogenase reductase ADP-ribosyltransferase modification is found at Arg-108. A [4Fe-4S] cluster-binding site is contributed by Cys-140.

The protein belongs to the NifH/BchL/ChlL family. In terms of assembly, homodimer. Requires [4Fe-4S] cluster as cofactor. Post-translationally, the reversible ADP-ribosylation of Arg-108 inactivates the nitrogenase reductase and regulates nitrogenase activity.

The catalysed reaction is N2 + 8 reduced [2Fe-2S]-[ferredoxin] + 16 ATP + 16 H2O = H2 + 8 oxidized [2Fe-2S]-[ferredoxin] + 2 NH4(+) + 16 ADP + 16 phosphate + 6 H(+). Its function is as follows. The key enzymatic reactions in nitrogen fixation are catalyzed by the nitrogenase complex, which has 2 components: the iron protein and the molybdenum-iron protein. The chain is Nitrogenase iron protein 1 (nifH1) from Methanothermococcus thermolithotrophicus (Methanococcus thermolithotrophicus).